The chain runs to 140 residues: MPTFNQLVRKGRKTMEKNSQAPALQKGFNSLRKKTTDASAPQKRGVCTAVRTATPKKPNSALRKIARVRLSNGIEVTSYIPGEGHNLQEHSVVLIRGGRVKDLPGTRYHIVRGTLDTAGVAKRRQARSKYGAKRPKEAKK.

A disordered region spans residues 1–44 (MPTFNQLVRKGRKTMEKNSQAPALQKGFNSLRKKTTDASAPQKR). 3-methylthioaspartic acid is present on Asp102. A disordered region spans residues 120–140 (VAKRRQARSKYGAKRPKEAKK). The segment covering 121 to 140 (AKRRQARSKYGAKRPKEAKK) has biased composition (basic residues).

This sequence belongs to the universal ribosomal protein uS12 family. As to quaternary structure, part of the 30S ribosomal subunit. Contacts proteins S8 and S17. May interact with IF1 in the 30S initiation complex.

Functionally, with S4 and S5 plays an important role in translational accuracy. Its function is as follows. Interacts with and stabilizes bases of the 16S rRNA that are involved in tRNA selection in the A site and with the mRNA backbone. Located at the interface of the 30S and 50S subunits, it traverses the body of the 30S subunit contacting proteins on the other side and probably holding the rRNA structure together. The combined cluster of proteins S8, S12 and S17 appears to hold together the shoulder and platform of the 30S subunit. In Lachnoclostridium phytofermentans (strain ATCC 700394 / DSM 18823 / ISDg) (Clostridium phytofermentans), this protein is Small ribosomal subunit protein uS12.